Here is a 1360-residue protein sequence, read N- to C-terminus: S-layer protein A (1360 aa).

The N-terminal stretch at 1–24 is a signal peptide; the sequence is MNKSAIRYLSLLLVFLMGGSFLAG.

The protein belongs to the Sulfolobales SlaA family. The mushroom-shaped unit cells of the Sulfolobales' S-layers may consist of three SlaB subunits and six SlaA subunits.

The protein localises to the secreted. Its subcellular location is the cell wall. It is found in the S-layer. In terms of biological role, S-layer large protein. May form the highly ordered outer sheath. This chain is S-layer protein A, found in Metallosphaera sedula (strain ATCC 51363 / DSM 5348 / JCM 9185 / NBRC 15509 / TH2).